Reading from the N-terminus, the 244-residue chain is Tubulin-folding cofactor B (244 aa).

The residue at position 1 (Met1) is an N-acetylmethionine. Tyr98 is modified (phosphotyrosine). The residue at position 110 (Ser110) is a Phosphoserine. Positions 183-225 (GLTDFKPGYWIGIRYDEPLGKNDGSVNGKRYFECQAKYGAFVK) constitute a CAP-Gly domain. Lys219 carries the N6-acetyllysine modification.

Belongs to the TBCB family. As to quaternary structure, supercomplex made of cofactors A to E. Cofactors A and D function by capturing and stabilizing tubulin in a quasi-native conformation. Cofactor E binds to the cofactor D-tubulin complex; interaction with cofactor C then causes the release of tubulin polypeptides that are committed to the native state. Cofactors B and E can form a heterodimer which binds to alpha-tubulin and enhances their ability to dissociate tubulin heterodimers. Interacts with GAN. Interacts with DCTN1. Post-translationally, ubiquitinated in the presence of GAN which targets it for degradation by the proteasome. In terms of processing, phosphorylation by PAK1 is required for normal function.

Its subcellular location is the cytoplasm. It localises to the cytoskeleton. In terms of biological role, binds to alpha-tubulin folding intermediates after their interaction with cytosolic chaperonin in the pathway leading from newly synthesized tubulin to properly folded heterodimer. Involved in regulation of tubulin heterodimer dissociation. May function as a negative regulator of axonal growth. This is Tubulin-folding cofactor B (TBCB) from Bos taurus (Bovine).